We begin with the raw amino-acid sequence, 669 residues long: MRRRHRCVALLFIFSAFITPLGFFYYTISNESKRYSEESEKNYGYQTLEFTESPEEISVDFDKYSQSECSRFPSNVEIEYPECLNKMKWIKNGWKTHHCYIENHIDGSECSFRYYLSQVENYCPPMEHHGKRKGLAKISPSIRRLLPIFESIPHYMKTRINRLWKKWKEGAHEVMQKYPKSMIERRKLNVLVFIGFLANEQKLNMAKKSDHGGPLGELLQWSDLLATLSVIGHHLEVSTNKNTLRNIVWKYMSRGPCQYVNNFRQQLDIIFTDIMGFNILRQHHRQFLLSNRCRIRLLDSFGTHAEFTTKTYFVQNKKSLSGPFSQRNPWGGHGLDLRQHWTFYPHSDDNTFLGFVVDTEGIDKKNNQMIPSALVYGKEQYMWRDAEKPIDVLKRIVTVHSTVADLDLKDSNISSIFKKVQNHGFLNSEEISQLLDNITIFFGLGFPLEGPAPLEAMAHGAVFINAKFKEPKSRLNYKFLAEKPTLRKWTSQNPYMEKIGEPHVITVDIFNELELEEAIKRAISLKPKHFVPFEFTPAGMLHRVALLLEKQELCDKIAYSKRWPPIDQMKIFRTLNADDSCETICHSKQLLCEPSYFPIINSSPLLRRENLCSSTTSDSSPFAPFNCTIQQSAFLFSCASSPPISFEINRLCPCRDYIPEQHAICKKCL.

Residues 1-7 (MRRRHRC) lie on the Cytoplasmic side of the membrane. The helical; Signal-anchor for type II membrane protein transmembrane segment at 8 to 28 (VALLFIFSAFITPLGFFYYTI) threads the bilayer. Over 29-669 (SNESKRYSEE…EQHAICKKCL (641 aa)) the chain is Lumenal. N-linked (GlcNAc...) asparagine glycans are attached at residues Asn-30, Asn-412, Asn-437, and Asn-626.

The protein belongs to the glycosyltransferase 18 family. In terms of tissue distribution, expressed in a complex subset of neurons in larvae and in the spermathecal and pharyngeal-intestinal valves and certain vulval cells of adults.

It localises to the golgi apparatus membrane. The catalysed reaction is N(4)-{beta-D-GlcNAc-(1-&gt;2)-[beta-D-GlcNAc-(1-&gt;4)]-alpha-D-Man-(1-&gt;3)-[beta-D-GlcNAc-(1-&gt;2)-alpha-D-Man-(1-&gt;6)]-beta-D-Man-(1-&gt;4)-beta-D-GlcNAc-(1-&gt;4)-beta-D-GlcNAc}-L-asparaginyl-[protein] + UDP-N-acetyl-alpha-D-glucosamine = N(4)-{beta-D-GlcNAc-(1-&gt;2)-[beta-D-GlcNAc-(1-&gt;4)]-alpha-D-Man-(1-&gt;3)-[beta-D-GlcNAc-(1-&gt;2)-[beta-D-GlcNAc-(1-&gt;6)]-alpha-D-Man-(1-&gt;6)]-beta-D-Man-(1-&gt;4)-beta-D-GlcNAc-(1-&gt;4)-beta-D-GlcNAc}-L-asparaginyl-[protein] + UDP + H(+). It participates in protein modification; protein glycosylation. Catalyzes the addition of N-acetylglucosamine (GlcNAc) in beta 1-6 linkage to the alpha-linked mannose of biantennary N-linked oligosaccharides. The sequence is that of Alpha-1,6-mannosylglycoprotein 6-beta-N-acetylglucosaminyltransferase (gly-2) from Caenorhabditis elegans.